The following is a 326-amino-acid chain: Homeobox protein Hox-A1 (326 aa).

The Antp-type hexapeptide motif lies at 196 to 201; that stretch reads TFDWMK. The homeobox DNA-binding region spans 221-280; it reads PNTVRTNFTTKQLTELEKEFHFNKYLTRARRVEIAAALQLNETQVKIWFQNRRMKQKKRE. Residues 273–326 form a disordered region; that stretch reads RMKQKKREKEGLTSASPATPGSEANTEDTSDKCNSTSSTPSPSSSTSETINTSG. Residues 285 to 296 are compositionally biased toward polar residues; sequence TSASPATPGSEA. Residues 306-326 are compositionally biased toward low complexity; it reads NSTSSTPSPSSSTSETINTSG.

It belongs to the Antp homeobox family. Labial subfamily.

It is found in the nucleus. Functionally, sequence-specific transcription factor. Part of a developmental regulatory system that provides cells with specific positional identities on the anterior-posterior axis. Acts on the anterior body structures. Seems to act in the maintenance and/or generation of hindbrain segments. The sequence is that of Homeobox protein Hox-A1 (HOXA1) from Heterodontus francisci (Horn shark).